Consider the following 156-residue polypeptide: Succinate dehydrogenase [ubiquinone] cytochrome b small subunit 1, mitochondrial (156 aa).

Residues 1 to 25 (MLSAVRRAIPLSARILRTSLIQRCA) constitute a mitochondrion transit peptide. Topologically, residues 26–59 (GATSAAVTGAAPPQFDPIAAEKGFKPLHSHGTLF) are mitochondrial matrix. Residues 60–78 (KIERYFAAAMVPLIPAAYF) form a helical membrane-spanning segment. Over 79–83 (IHGRE) the chain is Mitochondrial intermembrane. The chain crosses the membrane as a helical span at residues 84-104 (MDLCLALALTLHVHWGVWGVV). A heme b-binding site is contributed by H95. The Mitochondrial matrix portion of the chain corresponds to 105 to 119 (NDYGRPFVLGDTLAA). Y107 is an a rhodoquinol binding site. Residues 120–141 (AVRVGAYIFTACLLAGLLYFNE) traverse the membrane as a helical segment. Over 142 to 156 (HDVGLTRAFEMVWEL) the chain is Mitochondrial intermembrane.

This sequence belongs to the CybS family. Component of the mitochondrial electron transport chain complex II composed of four subunits: a flavoprotein (Fp), an iron-sulfur protein (Ip), and a large cytochrome b (CybL) subunit and a small cytochrome b (CybS) subunit. There are 2 developmental stage-specific forms of complex II which have the Ip and CybL subunits in common. Complex II from the free-living larvae (aerobic environment) acts as a succinate dehydrogenase and is composed of the common subunit Ip and CybL and the stage specific subunits FpL and CybSL. Complex II from parasitic larvae and adults (anaerobic environment) acts as a fumarate reductase and is composed of the common subunit Ip and CybL and the stage specific subunits FpA and CybSA. The cofactor is heme b. Expressed in adult muscles (at protein level).

Its subcellular location is the mitochondrion inner membrane. Functionally, membrane-bound small subunit (CybS) of the mitochondrial electron transport chain complex II, which together with the membrane-bound large subunit (CybL), anchor the catalytic subunits to the inner mitochondria membrane. During the parasitic larvae and adult stages, which occur in an anaerobic environment, complex II acts as a fumarate reductase by transferring electrons from rhodoquinol to fumarate. The protein is Succinate dehydrogenase [ubiquinone] cytochrome b small subunit 1, mitochondrial of Ascaris suum (Pig roundworm).